The following is a 962-amino-acid chain: Translation initiation factor IF-2 (962 aa).

Residues 99–366 (VKAAQTQAAP…KKGKKLKLEP (268 aa)) form a disordered region. Basic and acidic residues predominate over residues 117 to 141 (DAAKARAEAAARAEARAKAEAEAAK). A compositionally biased stretch (low complexity) spans 145-155 (AKAGNKAKPAA). The span at 173 to 216 (KPAEESKAEKAQADKMPSEKPAEPKEKAAKPKHERNGKGKDAKK) shows a compositional bias: basic and acidic residues. Residues 219-234 (KPAAPAVPQPVVSAEE) are compositionally biased toward low complexity. Over residues 235-269 (QAQRDEEARRAAALRAHQEALLKEKQERQARREAM) the composition is skewed to basic and acidic residues. The segment covering 270-283 (KQQAEQQAKAAQEA) has biased composition (low complexity). 2 stretches are compositionally biased toward basic and acidic residues: residues 314-327 (AKKE…DEGQ) and 338-354 (GGRD…ERVR). One can recognise a tr-type G domain in the interval 462 to 631 (PRPPVVTVMG…LLEAEVLELT (170 aa)). Positions 471 to 478 (GHVDHGKT) are G1. 471–478 (GHVDHGKT) lines the GTP pocket. A G2 region spans residues 496-500 (GITQH). The G3 stretch occupies residues 517 to 520 (DTPG). GTP contacts are provided by residues 517–521 (DTPGH) and 571–574 (NKID). The G4 stretch occupies residues 571–574 (NKID). Positions 607-609 (SAK) are G5.

It belongs to the TRAFAC class translation factor GTPase superfamily. Classic translation factor GTPase family. IF-2 subfamily.

Its subcellular location is the cytoplasm. Functionally, one of the essential components for the initiation of protein synthesis. Protects formylmethionyl-tRNA from spontaneous hydrolysis and promotes its binding to the 30S ribosomal subunits. Also involved in the hydrolysis of GTP during the formation of the 70S ribosomal complex. The sequence is that of Translation initiation factor IF-2 from Neisseria meningitidis serogroup B (strain ATCC BAA-335 / MC58).